Here is a 911-residue protein sequence, read N- to C-terminus: Anoctamin-6 (911 aa).

Over 1 to 301 (MQMMTRKVLL…YGEKIGIYFA (301 aa)) the chain is Cytoplasmic. A helical transmembrane segment spans residues 302–322 (WLGYYTQMLLLAAVVGVACFL). Topologically, residues 323 to 376 (YGYLDQDNCTWSKEVCDPDIGGQILMCPQCDRLCPFWRLNITCESSKKLCIFDS) are extracellular. An N-linked (GlcNAc...) asparagine glycan is attached at asparagine 330. 5 cysteine pairs are disulfide-bonded: cysteine 331/cysteine 372, cysteine 338/cysteine 365, cysteine 349/cysteine 807, cysteine 352/cysteine 356, and cysteine 596/cysteine 601. Asparagine 362 is a glycosylation site (N-linked (GlcNAc...) asparagine). Residues 377-397 (FGTLIFAVFMGVWVTLFLEFW) form a helical membrane-spanning segment. At 398–456 (KRRQAELEYEWDTVELQQEEQARPEYEAQCNHVVINEITQEEERIPFTTCGKCIRVTLC) the chain is on the cytoplasmic side. The helical transmembrane segment at 457 to 477 (ASAVFFWILLIIASVIGIIVY) threads the bilayer. Over 478–510 (RLSVFIVFSTTLPKNPNGTDPIQKYLTPQMATS) the chain is Extracellular. A glycan (N-linked (GlcNAc...) asparagine) is linked at asparagine 494. A helical transmembrane segment spans residues 511–531 (ITASIISFIIIMILNTIYEKV). The Cytoplasmic segment spans residues 532 to 552 (AIMITNFELPRTQTDYENSLT). The helical transmembrane segment at 553 to 573 (MKMFLFQFVNYYSSCFYIAFF) threads the bilayer. The Extracellular segment spans residues 574–602 (KGKFVGYPGDPVYLLGKYRSEECDPGGCL). The chain crosses the membrane as a helical span at residues 603–622 (LELTTQLTIIMGGKAIWNNI). Residues 623 to 664 (QEVLLPWVMNLIGRYKRVSGSEKITPRWEQDYHLQPMGKLGL) are Cytoplasmic-facing. Ca(2+) contacts are provided by glutamate 624, glutamate 667, and glutamate 670. Transmembrane regions (helical) follow at residues 665–685 (FYEY…VASF) and 686–706 (PLAP…DAWK). The Cytoplasmic portion of the chain corresponds to 707 to 723 (LTTQFRRMVPEKAQDIG). Residues 724–744 (AWQPIMQGIAILAVVTNAMII) form a helical membrane-spanning segment. The Extracellular segment spans residues 745-837 (AFTSDMIPRL…YWHVIAAKLA (93 aa)). N-linked (GlcNAc...) asparagine glycosylation is found at asparagine 778, asparagine 785, and asparagine 803. A helical transmembrane segment spans residues 838–858 (FIIVMEHIIYSVKFFISYAIP). Residues 859 to 911 (DVSKITKSKIKREKYLTQKLLHESHLKDLTKNMGIIAERIGGTVDNSVRPKLE) are Cytoplasmic-facing.

The protein belongs to the anoctamin family. In terms of assembly, homodimer. As to expression, predominant expression seen in epithelial tissues. Also found in skeletal system where it is primarily expressed in osteoblasts.

The protein resides in the cell membrane. It carries out the reaction a 1,2-diacyl-sn-glycero-3-phospho-L-serine(in) = a 1,2-diacyl-sn-glycero-3-phospho-L-serine(out). It catalyses the reaction a beta-D-galactosyl-(1&lt;-&gt;1')-N-acylsphing-4-enine(out) = a beta-D-galactosyl-(1&lt;-&gt;1')-N-acylsphing-4-enine(in). The catalysed reaction is a 1,2-diacyl-sn-glycero-3-phosphocholine(in) = a 1,2-diacyl-sn-glycero-3-phosphocholine(out). Its activity is regulated as follows. Exhibits synergistic gating by Ca(2+) and voltage. Inhibited by some non-specific cation channel blockers such as: ruthenium red, 2-aminoethyl diphenylborinate (2APB), gadolinium and cadmium ions. Its function is as follows. Small-conductance calcium-activated nonselective cation (SCAN) channel which acts as a regulator of phospholipid scrambling in platelets, osteoblasts and fetal thymocytes. Phospholipid scrambling results in surface exposure of phosphatidylserine which in platelets is essential to trigger the clotting system whereas in osteoblasts is essential for the deposition of hydroxyapatite during bone mineralization. Has calcium-dependent phospholipid scramblase activity; scrambles phosphatidylserine, phosphatidylcholine and galactosylceramide. Can generate outwardly rectifying chloride channel currents in airway epithelial cells and Jurkat T lymphocytes. This Mus musculus (Mouse) protein is Anoctamin-6 (Ano6).